The sequence spans 1549 residues: Ferredoxin-dependent glutamate synthase (1549 aa).

The active-site For GATase activity is the Cys-37. Residues 37–435 (CGVGFIAHLD…PGEMIVLDLQ (399 aa)) form the Glutamine amidotransferase type-2 domain. FMN is bound at residue 1116-1173 (LHEVHCLLVENNLREKVILRVDGGLRTGQDVVMAALLGADEYGFGTIAMIAGGCIMAR). Residues Cys-1169, Cys-1175, and Cys-1180 each coordinate [3Fe-4S] cluster.

This sequence belongs to the glutamate synthase family. Monomer. [3Fe-4S] cluster serves as cofactor. The cofactor is FAD. Requires FMN as cofactor.

It is found in the plastid. The protein resides in the chloroplast stroma. The catalysed reaction is 2 oxidized [2Fe-2S]-[ferredoxin] + 2 L-glutamate = L-glutamine + 2 reduced [2Fe-2S]-[ferredoxin] + 2-oxoglutarate + 2 H(+). It participates in amino-acid biosynthesis; L-glutamate biosynthesis via GLT pathway; L-glutamate from 2-oxoglutarate and L-glutamine (ferredoxin route): step 1/1. Its pathway is energy metabolism; nitrogen metabolism. In Cyanidium caldarium (Red alga), this protein is Ferredoxin-dependent glutamate synthase (gltB).